The chain runs to 485 residues: Noelin (485 aa).

An N-terminal signal peptide occupies residues Met1–Gln24. Asn33, Asn103, Asn187, Asn288, Asn307, Asn394, Asn431, and Asn473 each carry an N-linked (GlcNAc...) asparagine glycan. The stretch at Arg87–Leu225 forms a coiled coil. Positions Ala226 to His478 constitute an Olfactomedin-like domain. Cysteines 227 and 409 form a disulfide.

As to quaternary structure, homotetramer; disulfide-linked. Dimer of dimers, giving rise to a V-shaped homotretramer. Isoform 1 and isoform 3 interact with RTN4R. Identified in a complex with RTN4R and LINGO1. Peripherally associated with AMPAR complex. AMPAR complex consists of an inner core made of 4 pore-forming GluA/GRIA proteins (GRIA1, GRIA2, GRIA3 and GRIA4) and 4 major auxiliary subunits arranged in a twofold symmetry. One of the two pairs of distinct binding sites is occupied either by CNIH2, CNIH3 or CACNG2, CACNG3. The other harbors CACNG2, CACNG3, CACNG4, CACNG8 or GSG1L. This inner core of AMPAR complex is complemented by outer core constituents binding directly to the GluA/GRIA proteins at sites distinct from the interaction sites of the inner core constituents. Outer core constituents include at least PRRT1, PRRT2, CKAMP44/SHISA9, FRRS1L and NRN1. The proteins of the inner and outer core serve as a platform for other, more peripherally associated AMPAR constituents, including OLFM1. Alone or in combination, these auxiliary subunits control the gating and pharmacology of the AMPAR complex and profoundly impact their biogenesis and protein processing. Interacts with OLFM2. In terms of processing, in isoform 3 and isoform 4, the signal peptide is predicted to end in position 17. Expressed in the brain (at protein level). Expressed in the brain, predominantly in the cortex and hippocampus. In the pituitary only the two A-type and in the adrenal glands only the two B-type forms were detected.

The protein resides in the secreted. Its subcellular location is the synapse. It localises to the endoplasmic reticulum. It is found in the cell projection. The protein localises to the axon. The protein resides in the perikaryon. In terms of biological role, contributes to the regulation of axonal growth in the embryonic and adult central nervous system by inhibiting interactions between RTN4R and LINGO1. Inhibits RTN4R-mediated axon growth cone collapse. May play an important role in regulating the production of neural crest cells by the neural tube. May be required for normal responses to olfactory stimuli. The sequence is that of Noelin (Olfm1) from Rattus norvegicus (Rat).